Consider the following 369-residue polypeptide: 4-hydroxyproline betaine 2-epimerase (369 aa).

Tyr56 and Gln162 together coordinate substrate. Catalysis depends on Lys164, which acts as the Proton donor/acceptor. Positions 194, 219, and 242 each coordinate Mg(2+). Catalysis depends on Lys266, which acts as the Proton donor/acceptor. Ala295 contributes to the substrate binding site.

This sequence belongs to the mandelate racemase/muconate lactonizing enzyme family. It depends on Mg(2+) as a cofactor.

The catalysed reaction is trans-4-hydroxy-L-proline betaine = cis-4-hydroxy-D-proline betaine. It carries out the reaction L-proline betaine = D-proline betaine. Its function is as follows. Catalyzes the 2-epimerization of trans-4-hydroxy-L-proline betaine (tHyp-B) to cis-4-hydroxy-D-proline betaine (cHyp-B). Is involved in a catabolic pathway that degrades tHyp-B to alpha-ketoglutarate. This pathway would permit the utilization of tHyp-B as a carbon and nitrogen source in the absence of osmotic stress, since tHyp-B functions as an osmolyte and is not catabolized when it is needed as osmoprotectant. Can also catalyze the racemization of L-proline betaine. The sequence is that of 4-hydroxyproline betaine 2-epimerase (hpbD) from Paracoccus denitrificans (strain Pd 1222).